The sequence spans 295 residues: Probable WRKY transcription factor 46 (295 aa).

A DNA-binding region (WRKY) is located at residues 98–166; the sequence is QENGSIDDGH…YLGNHTCNNI (69 aa).

It belongs to the WRKY group III family. In terms of assembly, binds to BZR2/BES1 to cooperatively regulate the expression of target genes. Post-translationally, phosphorylated and destabilized by ASK7/BIN2. In terms of tissue distribution, expressed in guard cells, hypocotyls, and in the vascular tissues of cotyledon and root. Mostly expressed in roots, at lower levels in leaves and petioles, and, to a lower extent, in stems, flowers and siliques.

The protein localises to the nucleus. In terms of biological role, transcription factor involved in the regulation of osmotic stress responses and stomatal movement. Interacts specifically with the W box (5'-(T)TGAC[CT]-3'), a frequently occurring elicitor-responsive cis-acting element. Positive regulator of EDS1-dependent defense against E.amylovora. Together with WRKY70 and WRKY53, promotes resistance to P.syringae, probably by enhancing salicylic acid (SA)- dependent genes. Contributes to the suppression of jasmonic acid (MeJA)-induced expression of PDF1.2. Together with WRKY54 and WRKY70, promotes brassinosteroid (BR)-regulated plant growth but prevent drought response by modulating gene expression. The protein is Probable WRKY transcription factor 46 (WRKY46) of Arabidopsis thaliana (Mouse-ear cress).